A 1093-amino-acid polypeptide reads, in one-letter code: Synaptopodin-2 (1093 aa).

The tract at residues 1-180 (MGTGDFICIS…PDSQRGRVAE (180 aa)) is interaction with VPS18. Positions 6–88 (FICISMTGGA…SLQMLIKRPS (83 aa)) constitute a PDZ domain. Disordered regions lie at residues 144–174 (ENQR…PDSQ) and 211–233 (ASGP…DPNL). Residues 222-233 (EKSKSPDPDPNL) show a composition bias toward basic and acidic residues. Residues Ser274, Ser310, Ser329, and Ser330 each carry the phosphoserine modification. Positions 329–369 (SSEGTEQGEDPRSEKDHSRPHKHRARHARLRRSESLSEKQV) are disordered. Position 333 is a phosphothreonine (Thr333). Residues 346–358 (SRPHKHRARHARL) show a composition bias toward basic residues. Over residues 359–369 (RRSESLSEKQV) the composition is skewed to basic and acidic residues. Residues 398–406 (KKRRRRARK) carry the Nuclear localization signal motif. 3 interaction with ACTN2 regions span residues 481–663 (MEML…FYDS), 664–924 (SERI…PPVA), and 901–1093 (QSPT…VVEE). Disordered stretches follow at residues 507–803 (AQKE…GTVV) and 834–870 (AVAS…GMSG). F-actin binding regions lie at residues 534 to 663 (TSYQ…FYDS) and 664 to 803 (SERI…GTVV). Phosphoserine is present on residues Ser548, Ser549, and Ser551. Polar residues-rich tracts occupy residues 565-579 (PQQN…TANI) and 595-611 (SVNQ…NMTS). Ser604 bears the Phosphoserine mark. The tract at residues 607-811 (RNMTSPIADF…VVSSIKIAQP (205 aa)) is interaction with YWHAB. Thr610 carries the post-translational modification Phosphothreonine. At Ser611 the chain carries Phosphoserine. Residues 615 to 626 (DFPAPPPYSAVT) are interaction with BAG3. 2 stretches are compositionally biased toward pro residues: residues 617–630 (PAPP…PPPD) and 644–655 (AQPPPWPQPAPW). The PPPY motif motif lies at 619–622 (PPPY). Tyr622 is subject to Phosphotyrosine. Position 626 is a phosphothreonine (Thr626). Over residues 663 to 674 (SSERIASRDERI) the composition is skewed to basic and acidic residues. The interval 664-916 (SERIASRDER…LPASWKYSSN (253 aa)) is F-actin bundling activity. Residues Ser705 and Ser729 each carry the phosphoserine modification. The tract at residues 751-900 (AKQKTPPPVA…DTVQAHAARA (150 aa)) is actin binding. Phosphothreonine occurs at positions 755 and 774. The span at 762–784 (KPAVKSSSSQPVTPVSPVWSPGV) shows a compositional bias: low complexity. Residues Ser777 and Ser781 each carry the phosphoserine modification. Composition is skewed to polar residues over residues 793–803 (PTSNPSKGTVV) and 835–853 (VASQ…TVNA). The interaction with FLNC stretch occupies residues 810–1093 (QPSYPPARPA…QVWKPSVVEE (284 aa)). Phosphoserine occurs at positions 902, 906, and 910. The disordered stretch occupies residues 937–956 (ALKSQPSAAQPSKMGKKKGK). The segment at 1000–1019 (LAMKQALPPRPVNAASPTNV) is interaction with ZYX. Residue Ser1015 is modified to Phosphoserine. Over residues 1041–1050 (SSPVSASPVP) the composition is skewed to low complexity. The interval 1041-1064 (SSPVSASPVPVGIPTSPKQESASS) is disordered. Ser1056 carries the post-translational modification Phosphoserine.

This sequence belongs to the synaptopodin family. As to quaternary structure, may self-associate in muscle cells under oxidative stress. Binds F-actin. Interacts with ACTN2; ACTN2 is proposed to anchor SYOP2 at Z lines in mature myocytes. Interacts with AKAP6, PPP3CA and CAMK2A. Interacts (phosphorylated form) with YWHAB; YWHAB competes with ACTN2 for interaction with SYNPO2. Interacts with KPNA2; mediating nuclear import of SYNOP2; dependent on interaction with YWHAB. Interacts with IPO13; may be implicated in SYNOP2 nuclear import. Interacts with ZYX, FLNC, ILK. Interacts with BAG3 (via WW 1 domain). May associate with the CASA complex consisting of HSPA8, HSPB8 and BAG3. Interacts with VPS18. In terms of processing, phosphorylated by PKA, and by CaMK2 at multiple sites. Dephosphorylated by calcineurin; abrogating interaction with YWHAB and impairing nuclear import. Phosphorylated by ILK. In terms of tissue distribution, expressed in heart muscle. Isoform 5 is specifically expressed in skeletal muscle.

Its subcellular location is the nucleus. It is found in the cytoplasm. The protein localises to the cytoskeleton. The protein resides in the myofibril. It localises to the sarcomere. Its subcellular location is the z line. It is found in the cell junction. The protein localises to the focal adhesion. Functionally, has an actin-binding and actin-bundling activity. Can induce the formation of F-actin networks in an isoform-specific manner. At the sarcomeric Z lines is proposed to act as adapter protein that links nascent myofibers to the sarcolemma via ZYX and may play a role in early assembly and stabilization of the Z lines. Involved in autophagosome formation. May play a role in chaperone-assisted selective autophagy (CASA) involved in Z lines maintenance in striated muscle under mechanical tension; may link the client-processing CASA chaperone machinery to a membrane-tethering and fusion complex providing autophagosome membranes. Involved in regulation of cell migration. May be a tumor suppressor. Involved in regulation of cell migration. Can induce formation of thick, irregular actin bundles in the cell body. Its function is as follows. Involved in regulation of cell migration. Can induce long, well-organized actin bundles frequently orientated in parallel along the long axis of the cell showing characteristics of contractile ventral stress fibers. In terms of biological role, involved in regulation of cell migration. Can induce an amorphous actin meshwork throughout the cell body containing a mixture of long and short, randomly organized thick and thin actin bundles. Functionally, can induce long, well-organized actin bundles frequently orientated in parallel along the long axis of the cell showing characteristics of contractile ventral stress fibers. Involved in regulation of cell migration in part dependent on the Rho-ROCK cascade; can promote formation of nascent focal adhesions, actin bundles at the leading cell edge and lamellipodia. Can induce formation of thick, irregular actin bundles in the cell body; the induced actin network is associated with enhanced cell migration in vitro. The sequence is that of Synaptopodin-2 (SYNPO2) from Homo sapiens (Human).